Here is a 297-residue protein sequence, read N- to C-terminus: HTH-type transcriptional regulator ArgP (297 aa).

The HTH lysR-type domain maps to 4–60; sequence PDYRTLQALDAVIRERGFERAAQKLCITQSAVSQRIKQLENLFGQPLLVRTIPPRPT. The segment at residues 21 to 40 is a DNA-binding region (H-T-H motif); it reads FERAAQKLCITQSAVSQRIK.

It belongs to the LysR transcriptional regulatory family. As to quaternary structure, homodimer.

Functionally, controls the transcription of genes involved in arginine and lysine metabolism. The protein is HTH-type transcriptional regulator ArgP of Pectobacterium carotovorum subsp. carotovorum (strain PC1).